Here is a 756-residue protein sequence, read N- to C-terminus: Amine oxidase [copper-containing] 2 (756 aa).

The Cytoplasmic portion of the chain corresponds to 1–4; sequence MHLK. A helical transmembrane segment spans residues 5–25; the sequence is IVLAFLALSLITIFALAYVLL. Residues 26-756 are Extracellular-facing; the sequence is TSPGGSSQPP…DLPPFSYHGF (731 aa). N-linked (GlcNAc...) asparagine glycans are attached at residues asparagine 133, asparagine 198, and asparagine 226. Aspartate 380 functions as the Proton acceptor in the catalytic mechanism. The cysteines at positions 398 and 424 are disulfide-linked. Tyrosine 465 serves as the catalytic Schiff-base intermediate with substrate; via topaquinone. Residue tyrosine 465 is modified to 2',4',5'-topaquinone. 2 residues coordinate Cu(2+): histidine 516 and histidine 518. The Ca(2+) site is built by aspartate 525, leucine 526, aspartate 527, glutamate 568, glutamate 637, phenylalanine 659, and asparagine 661. Residue asparagine 662 is glycosylated (N-linked (GlcNAc...) asparagine). The Ca(2+) site is built by glutamate 663, aspartate 669, and leucine 670. Histidine 680 contacts Cu(2+). The cysteines at positions 730 and 737 are disulfide-linked.

The protein belongs to the copper/topaquinone oxidase family. Homodimer; disulfide-linked. Probably forms heterodimers with AOC3. Requires Cu(2+) as cofactor. Ca(2+) serves as cofactor. L-topaquinone is required as a cofactor. Post-translationally, topaquinone (TPQ) is generated by copper-dependent autoxidation of a specific tyrosyl residue. In terms of tissue distribution, expressed in many tissues including adipocytes with higher expression in retina where it is active. Not expressed in testis. As to expression, not expressed in thymus.

The protein localises to the cell membrane. It is found in the cytoplasm. It catalyses the reaction 2-phenylethylamine + O2 + H2O = 2-phenylacetaldehyde + H2O2 + NH4(+). The enzyme catalyses tryptamine + O2 + H2O = indole-3-acetaldehyde + H2O2 + NH4(+). The catalysed reaction is tyramine + O2 + H2O = (4-hydroxyphenyl)acetaldehyde + H2O2 + NH4(+). In terms of biological role, catalyzes the oxidative deamination of primary amines to the corresponding aldehydes with the concomitant production of hydrogen peroxide and ammonia. Has a preference for 2-phenylethylamine, tryptamine and tyramine. Could also act on methylamine and benzylamine but much less efficiently. The chain is Amine oxidase [copper-containing] 2 from Homo sapiens (Human).